The following is a 1181-amino-acid chain: Sodium/potassium/calcium exchanger 1 (1181 aa).

Topologically, residues 1-419 (MGKLIRMGTQ…DLFSVEDRRQ (419 aa)) are extracellular. Disordered regions lie at residues 107 to 232 (AMED…TSLK), 255 to 276 (SLVGKNTLGSPRRGERNSSTTP), and 300 to 323 (STPATTEGSTAAQRIGNPLSGTST). A compositionally biased stretch (polar residues) spans 124-136 (SLKNNYSPTTAGT). N-linked (GlcNAc...) asparagine glycosylation occurs at N271. Residues 301 to 311 (TPATTEGSTAA) show a composition bias toward polar residues. A helical membrane pass occupies residues 420-440 (GWVVLHIFGMTYVFVALAIVC). The Cytoplasmic segment spans residues 441 to 464 (DEYFVPALGVITDKLQISEDVAGA). The stretch at 461-501 (VAGATFMAAGGSAPELFTSLIGVFISHSNVGIGTIVGSAVF) is one Alpha-1 repeat. The helical transmembrane segment at 465–485 (TFMAAGGSAPELFTSLIGVFI) threads the bilayer. Topologically, residues 486 to 491 (SHSNVG) are extracellular. The helical transmembrane segment at 492–512 (IGTIVGSAVFNILFVIGTCAL) threads the bilayer. The Cytoplasmic portion of the chain corresponds to 513–519 (FSREILN). Residues 520–544 (LTWWPLFRDVSFYILDLSMLIVFFL) form a helical membrane-spanning segment. Topologically, residues 545-552 (DSLIAWWE) are extracellular. The helical transmembrane segment at 553-569 (SLLLLLAYALYVFTMKW) threads the bilayer. At 570–989 (NKQIERWVKE…SLEWPESRQK (420 aa)) the chain is on the cytoplasmic side. A disordered region spans residues 598–617 (PSDGAIEENEQQDNKKLKLP). S625 bears the Phosphoserine mark. The disordered stretch occupies residues 650-983 (GEARPSKDKQ…ESEEPLSLEW (334 aa)). T690 bears the Phosphothreonine mark. Acidic residues predominate over residues 701–715 (GDQEEDPGCQEDVDE). 14 repeat units span residues 730–741 (ETEAEGKKDEEG), 742–754 (ETEAERKEDGQEE), 755–766 (ETETKGKEKQEG), 767–778 (ETESEGKDEQEG), 779–791 (ETEAEGKEADHEG), 792–804 (ETEAEGKEVEHEG), 805–817 (ETEAEGTEDEQEG), 818–830 (ETEAEGKEVEQEG), 831–843 (ETEAEGKEVEHEV), 844–856 (ETEAERKETNHEG), 857–869 (ETEAEGKEADHEG), 870–881 (ETEAEGNVEHQG), 882–893 (ETEAEGKVEHEG), and 894–905 (ETEAGEKDEHEG). 3 stretches are compositionally biased toward basic and acidic residues: residues 730 to 750 (ETEAEGKKDEEGETEAERKED), 757 to 775 (ETKGKEKQEGETESEGKDE), and 782 to 805 (AEGKEADHEGETEAEGKEVEHEGE). Residues 730–905 (ETEAEGKKDE…EAGEKDEHEG (176 aa)) form a 14 X approximate tandem repeats region. The segment covering 806–820 (TEAEGTEDEQEGETE) has biased composition (acidic residues). The span at 834–906 (AEGKEVEHEV…AGEKDEHEGQ (73 aa)) shows a compositional bias: basic and acidic residues. 2 stretches are compositionally biased toward acidic residues: residues 921-931 (GEAEANAEDQC) and 949-979 (GDSEEEEDEEDEEEEEEEEEEEEEEESEEPL). The chain crosses the membrane as a helical span at residues 990–1010 (QAIYLFLLPIVFPLWLTIPDV). Residues 1011–1017 (RRQEARK) lie on the Extracellular side of the membrane. Residues 1018 to 1038 (FFVITFLGSIIWIAMFSYLMV) form a helical membrane-spanning segment. Over 1039–1053 (WWAHQVGETIGISEE) the chain is Cytoplasmic. The chain crosses the membrane as a helical span at residues 1054–1074 (IMGLTILAAGTSIPDLITSVI). The stretch at 1061–1092 (AAGTSIPDLITSVIVARKGLGDMAVSSSVGSN) is one Alpha-2 repeat. Residues 1075-1092 (VARKGLGDMAVSSSVGSN) are Extracellular-facing. A helical membrane pass occupies residues 1093-1113 (IFDITVGLPVPWLLFSLINAL). Residues 1114–1121 (QPIPVSSN) are Cytoplasmic-facing. The chain crosses the membrane as a helical span at residues 1122–1142 (GLFCAIVLLFLMLLFVIFSIA). Residues 1143–1150 (SCKWRMNK) lie on the Extracellular side of the membrane. A helical transmembrane segment spans residues 1151–1171 (ILGFTMFLLYFVFLVISVMLE). Topologically, residues 1172–1181 (DRIISCPVSV) are cytoplasmic.

The protein belongs to the Ca(2+):cation antiporter (CaCA) (TC 2.A.19) family. SLC24A subfamily. Post-translationally, the uncleaved signal sequence is required for efficient membrane targeting and proper membrane integration and topology. Highly expressed in the eye.

It localises to the cell membrane. The enzyme catalyses Ca(2+)(out) + K(+)(out) + 4 Na(+)(in) = Ca(2+)(in) + K(+)(in) + 4 Na(+)(out). Its function is as follows. Calcium, potassium:sodium antiporter that transports 1 Ca(2+) and 1 K(+) in exchange for 4 Na(+). Critical component of the visual transduction cascade, controlling the calcium concentration of outer segments during light and darkness. Light causes a rapid lowering of cytosolic free calcium in the outer segment of both retinal rod and cone photoreceptors and the light-induced lowering of calcium is caused by extrusion via this protein which plays a key role in the process of light adaptation. This chain is Sodium/potassium/calcium exchanger 1 (Slc24a1), found in Rattus norvegicus (Rat).